Reading from the N-terminus, the 237-residue chain is Ribonuclease PH (237 aa).

Phosphate-binding positions include Arg-86 and 124-126 (GTR).

This sequence belongs to the RNase PH family. Homohexameric ring arranged as a trimer of dimers.

The catalysed reaction is tRNA(n+1) + phosphate = tRNA(n) + a ribonucleoside 5'-diphosphate. Functionally, phosphorolytic 3'-5' exoribonuclease that plays an important role in tRNA 3'-end maturation. Removes nucleotide residues following the 3'-CCA terminus of tRNAs; can also add nucleotides to the ends of RNA molecules by using nucleoside diphosphates as substrates, but this may not be physiologically important. Probably plays a role in initiation of 16S rRNA degradation (leading to ribosome degradation) during starvation. The chain is Ribonuclease PH from Methylobacterium sp. (strain 4-46).